The sequence spans 164 residues: Mineralocorticoid receptor (164 aa).

Residues 1–162 enclose the NR LBD domain; it reads QYSWMCLSSF…EFPRCWWRSS (162 aa). Arg-15 and Thr-143 together coordinate 21-hydroxyprogesterone. Aldosterone contacts are provided by Arg-15 and Thr-143. Residues Arg-15 and Thr-143 each contribute to the progesterone site.

This sequence belongs to the nuclear hormone receptor family. NR3 subfamily. Heteromultimeric cytoplasmic complex with HSP90, HSP70, and FKBP4, in the absence of ligand. After ligand binding, it translocates to the nucleus and binds to DNA as a homodimer and as a heterodimer with NR3C1. Binds the coactivator NCOA2. May interact with HSD11B2 in the absence of ligand. Binds the coactivators NCOA1, TIF1 and NRIP1. Phosphorylated.

It localises to the cytoplasm. The protein resides in the nucleus. It is found in the endoplasmic reticulum membrane. Its function is as follows. Receptor for both mineralocorticoids (MC) such as aldosterone and glucocorticoids (GC) such as corticosterone or cortisol. Binds to mineralocorticoid response elements (MRE) and transactivates target genes. The effect of MC is to increase ion and water transport and thus raise extracellular fluid volume and blood pressure and lower potassium levels. The protein is Mineralocorticoid receptor (NR3C2) of Sus scrofa (Pig).